The following is a 268-amino-acid chain: 3-deoxy-manno-octulosonate cytidylyltransferase (268 aa).

The protein belongs to the KdsB family.

It localises to the cytoplasm. The catalysed reaction is 3-deoxy-alpha-D-manno-oct-2-ulosonate + CTP = CMP-3-deoxy-beta-D-manno-octulosonate + diphosphate. It participates in nucleotide-sugar biosynthesis; CMP-3-deoxy-D-manno-octulosonate biosynthesis; CMP-3-deoxy-D-manno-octulosonate from 3-deoxy-D-manno-octulosonate and CTP: step 1/1. The protein operates within bacterial outer membrane biogenesis; lipopolysaccharide biosynthesis. Its function is as follows. Activates KDO (a required 8-carbon sugar) for incorporation into bacterial lipopolysaccharide in Gram-negative bacteria. The sequence is that of 3-deoxy-manno-octulosonate cytidylyltransferase from Ralstonia nicotianae (strain ATCC BAA-1114 / GMI1000) (Ralstonia solanacearum).